The primary structure comprises 114 residues: Ferritin-like protein (114 aa).

Glu29, Glu59, and His62 together coordinate Fe cation. Residues 86 to 114 form a cargo-loading peptide region; sequence FTDKPITEIEEETSGGSENTGGDLGIRKL. The interval 94 to 114 is disordered; sequence IEEETSGGSENTGGDLGIRKL. Residues 103–114 show a composition bias toward gly residues; sequence ENTGGDLGIRKL.

Belongs to the ferritin-like superfamily. In terms of assembly, probably forms a decamer which binds to the pentameric axis of the interior of the protein shell; as the Flp cargo protein is flexible, packing into the shell is not rigid. 3, 4 or 5 cargo decamers bind inside the encapulin nanocompartment. Fe cation serves as cofactor.

It localises to the encapsulin nanocompartment. In terms of biological role, cargo protein of a type 1 encapsulin nanocompartment. A ferritin-like protein that probably stores iron in the encapsulin nanocompartment. This is Ferritin-like protein from Thermotoga maritima (strain ATCC 43589 / DSM 3109 / JCM 10099 / NBRC 100826 / MSB8).